The primary structure comprises 239 residues: Probable transcriptional regulatory protein EF_2866 (239 aa).

This sequence belongs to the TACO1 family. YeeN subfamily.

The protein resides in the cytoplasm. The polypeptide is Probable transcriptional regulatory protein EF_2866 (Enterococcus faecalis (strain ATCC 700802 / V583)).